We begin with the raw amino-acid sequence, 200 residues long: Holliday junction branch migration complex subunit RuvA (200 aa).

The segment at 1-65 (MYEYIKGTLT…ETEHVLYGFS (65 aa)) is domain I. The domain II stretch occupies residues 66–144 (SRAERECFRL…TLMPLYLEEP (79 aa)). The flexible linker stretch occupies residues 145–149 (VVPSS). A domain III region spans residues 150 to 200 (TANSSFKEGIGALMNLGFSRLAADRMMTEAVKELSEEASVAELLPIALRKS).

Belongs to the RuvA family. Homotetramer. Forms an RuvA(8)-RuvB(12)-Holliday junction (HJ) complex. HJ DNA is sandwiched between 2 RuvA tetramers; dsDNA enters through RuvA and exits via RuvB. An RuvB hexamer assembles on each DNA strand where it exits the tetramer. Each RuvB hexamer is contacted by two RuvA subunits (via domain III) on 2 adjacent RuvB subunits; this complex drives branch migration. In the full resolvosome a probable DNA-RuvA(4)-RuvB(12)-RuvC(2) complex forms which resolves the HJ.

The protein localises to the cytoplasm. The RuvA-RuvB-RuvC complex processes Holliday junction (HJ) DNA during genetic recombination and DNA repair, while the RuvA-RuvB complex plays an important role in the rescue of blocked DNA replication forks via replication fork reversal (RFR). RuvA specifically binds to HJ cruciform DNA, conferring on it an open structure. The RuvB hexamer acts as an ATP-dependent pump, pulling dsDNA into and through the RuvAB complex. HJ branch migration allows RuvC to scan DNA until it finds its consensus sequence, where it cleaves and resolves the cruciform DNA. The sequence is that of Holliday junction branch migration complex subunit RuvA from Chlamydia trachomatis serovar D (strain ATCC VR-885 / DSM 19411 / UW-3/Cx).